A 125-amino-acid polypeptide reads, in one-letter code: Large ribosomal subunit protein bL12 (125 aa).

Belongs to the bacterial ribosomal protein bL12 family. As to quaternary structure, homodimer. Part of the ribosomal stalk of the 50S ribosomal subunit. Forms a multimeric L10(L12)X complex, where L10 forms an elongated spine to which 2 to 4 L12 dimers bind in a sequential fashion. Binds GTP-bound translation factors.

Forms part of the ribosomal stalk which helps the ribosome interact with GTP-bound translation factors. Is thus essential for accurate translation. This is Large ribosomal subunit protein bL12 from Rickettsia felis (strain ATCC VR-1525 / URRWXCal2) (Rickettsia azadi).